A 408-amino-acid polypeptide reads, in one-letter code: Probable 2,3-bisphosphoglycerate-independent phosphoglycerate mutase (408 aa).

The protein belongs to the BPG-independent phosphoglycerate mutase family. A-PGAM subfamily.

It catalyses the reaction (2R)-2-phosphoglycerate = (2R)-3-phosphoglycerate. The protein operates within carbohydrate degradation; glycolysis; pyruvate from D-glyceraldehyde 3-phosphate: step 3/5. In terms of biological role, catalyzes the interconversion of 2-phosphoglycerate and 3-phosphoglycerate. The protein is Probable 2,3-bisphosphoglycerate-independent phosphoglycerate mutase of Deinococcus geothermalis (strain DSM 11300 / CIP 105573 / AG-3a).